Consider the following 470-residue polypeptide: Calcitonin gene-related peptide type 1 receptor (470 aa).

The N-terminal stretch at 1–23 (MTASCWTICLFLLGSVTEFIVLA) is a signal peptide. The Extracellular segment spans residues 24 to 147 (SPEVNESQQQ…HTTEGRRTAM (124 aa)). 4 N-linked (GlcNAc...) asparagine glycosylation sites follow: Asn28, Asn74, Asn126, and Asn131. Intrachain disulfides connect Cys56–Cys82, Cys73–Cys113, and Cys96–Cys135. A helical membrane pass occupies residues 148-172 (NLFYLALIGHGLSLTSLFISLGIFF). Topologically, residues 173-183 (HFKSLSCQRIT) are cytoplasmic. Residues 184–206 (LHKNLFFSFVLNSIITIIWLTAV) form a helical membrane-spanning segment. Topologically, residues 207-217 (ANNQELVQQNP) are extracellular. Residues 218 to 246 (ISCKISQFIHLYIFGCNYFWMLCEGIYLH) traverse the membrane as a helical segment. Over 247 to 260 (TLIVVAVFAEKQHL) the chain is Cytoplasmic. The helical transmembrane segment at 261–281 (MWYYLLGWGFPLIPATIHAVA) threads the bilayer. Residues 282 to 297 (RSYYYNDNCWISSNTS) lie on the Extracellular side of the membrane. Asn295 carries an N-linked (GlcNAc...) asparagine glycan. A helical transmembrane segment spans residues 298–322 (LLYIIHGPICAAMLVNLFFLLNIVR). At 323-337 (VLITKLKVTHQAKSS) the chain is on the cytoplasmic side. Residues 338–359 (LYMKAVRATLILVPLLGIQYVL) traverse the membrane as a helical segment. The Extracellular segment spans residues 360-374 (LPYKPSGRVSAEIYD). Residues 375-395 (YIMHILMHYQGLLVATIFCFF) form a helical membrane-spanning segment. The Cytoplasmic segment spans residues 396–470 (NGEVQAVLRR…AIIKPENPFA (75 aa)).

This sequence belongs to the G-protein coupled receptor 2 family.

It localises to the cell membrane. May function as G protein-coupled receptor for calcitonin-gene-related peptides and adrenomedullin. Specificity may be modulated by accessory proteins. May activate cAMP-dependent pathway. In Danio rerio (Zebrafish), this protein is Calcitonin gene-related peptide type 1 receptor (calcrla).